Here is a 181-residue protein sequence, read N- to C-terminus: MAGKAGRKQASSNAKIIQGLYKQVSLFLGMAIVRLFISRKVTIGQWIKLVALNVPMFVALYIIVLSGKPKYDGNRVVKQGIDLNDNTNLISYFFDLIYLSLFGNIGIIAFRTFKFWWCLLLCPIYAGYKLYGLKNMFMPGAQQTQADNRSKNANEGQSKSKRQMKRERRGETDSKIKYKYR.

Topologically, residues 1-15 are cytoplasmic; that stretch reads MAGKAGRKQASSNAK. The chain crosses the membrane as a helical span at residues 16 to 36; it reads IIQGLYKQVSLFLGMAIVRLF. Residues 37–45 lie on the Lumenal side of the membrane; that stretch reads ISRKVTIGQ. A helical transmembrane segment spans residues 46 to 66; that stretch reads WIKLVALNVPMFVALYIIVLS. Over 67 to 89 the chain is Cytoplasmic; the sequence is GKPKYDGNRVVKQGIDLNDNTNL. A helical transmembrane segment spans residues 90–110; sequence ISYFFDLIYLSLFGNIGIIAF. Over 111-112 the chain is Lumenal; sequence RT. A helical transmembrane segment spans residues 113-133; it reads FKFWWCLLLCPIYAGYKLYGL. At 134–181 the chain is on the cytoplasmic side; the sequence is KNMFMPGAQQTQADNRSKNANEGQSKSKRQMKRERRGETDSKIKYKYR. The span at 144 to 157 shows a compositional bias: polar residues; it reads TQADNRSKNANEGQ. The disordered stretch occupies residues 144–181; that stretch reads TQADNRSKNANEGQSKSKRQMKRERRGETDSKIKYKYR. A compositionally biased stretch (basic and acidic residues) spans 168–181; it reads RRGETDSKIKYKYR.

It belongs to the TMEM208 family. As to quaternary structure, interacts with SND1, PHO88/SND3 and the translocon complex subunit SEC61. ENV10/SND2 and PHO88/SND3 form a complex with the translocon in the endoplasmic reticulum membrane.

It localises to the endoplasmic reticulum membrane. Functionally, functions in the SND pathway, a SRP (signal recognition particle) and GET (guided entry of tail-anchored proteins) independent pathway for targeting a broad range of substrate proteins to the endoplasmic reticulum. SND functions in parallel to GET in targeting proteins with downstream hydrophobic motifs. Involved in vacuolar processing and morphology. This Saccharomyces cerevisiae (strain ATCC 204508 / S288c) (Baker's yeast) protein is SRP-independent targeting protein 2.